Here is a 522-residue protein sequence, read N- to C-terminus: Calcium-dependent protein kinase 14 (522 aa).

Low complexity-rich tracts occupy residues 1-12 (MGNCCPPGSSSE) and 19-45 (SSGSSRPAGSAGAAASPATISPSAAPA). The interval 1–58 (MGNCCPPGSSSEPDPPPASSGSSRPAGSAGAAASPATISPSAAPAPAKPPAPIGPVLG) is disordered. The N-myristoyl glycine moiety is linked to residue Gly-2. In terms of domain architecture, Protein kinase spans 68 to 326 (YTVGKELGRG…AYDVLNHPWI (259 aa)). ATP is bound by residues 74–82 (LGRGQFGVT) and Lys-97. Asp-192 (proton acceptor) is an active-site residue. The segment at 332–362 (APDTPLDNAVLGRLKQFRAMNQFKKAALRVI) is autoinhibitory domain. 4 consecutive EF-hand domains span residues 369-404 (EEIRGLKEMFKSMDSDNSGTITVDELRKGLAKKGTK), 405-440 (LTEAEVQQLMEAADADGNGTIDYEEFITATMHMNRM), 441-476 (DREEHLYTAFQYFDKDNSGYITIEELEQALREKGLM), and 480-511 (EIKDIISEVDADNDGRINYTEFVAMMRKGDPE). Asp-382, Asp-384, Ser-386, Thr-388, Glu-393, Asp-418, Asp-420, Asn-422, Thr-424, Glu-429, Asp-454, Asp-456, Ser-458, Tyr-460, Glu-465, Asp-489, Asp-491, Asp-493, Arg-495, and Glu-500 together coordinate Ca(2+).

The protein belongs to the protein kinase superfamily. Ser/Thr protein kinase family. CDPK subfamily.

It is found in the membrane. It catalyses the reaction L-seryl-[protein] + ATP = O-phospho-L-seryl-[protein] + ADP + H(+). It carries out the reaction L-threonyl-[protein] + ATP = O-phospho-L-threonyl-[protein] + ADP + H(+). Activated by calcium. Autophosphorylation may play an important role in the regulation of the kinase activity. May play a role in signal transduction pathways that involve calcium as a second messenger. The polypeptide is Calcium-dependent protein kinase 14 (Oryza sativa subsp. japonica (Rice)).